Here is a 424-residue protein sequence, read N- to C-terminus: Protein pellino (424 aa).

The tract at residues 1 to 21 (MVKRTDGTESPILAEDGGDGH) is disordered. Ser10 is modified (phosphoserine).

The protein belongs to the pellino family. As to quaternary structure, interacts with pll.

Scaffold protein involved in the Toll signaling pathway via its interaction with pelle/pll kinase. The polypeptide is Protein pellino (Pli) (Drosophila melanogaster (Fruit fly)).